Here is a 218-residue protein sequence, read N- to C-terminus: 3-isopropylmalate dehydratase small subunit (218 aa).

Belongs to the LeuD family. LeuD type 1 subfamily. Heterodimer of LeuC and LeuD.

The enzyme catalyses (2R,3S)-3-isopropylmalate = (2S)-2-isopropylmalate. It participates in amino-acid biosynthesis; L-leucine biosynthesis; L-leucine from 3-methyl-2-oxobutanoate: step 2/4. Catalyzes the isomerization between 2-isopropylmalate and 3-isopropylmalate, via the formation of 2-isopropylmaleate. The sequence is that of 3-isopropylmalate dehydratase small subunit from Alkalilimnicola ehrlichii (strain ATCC BAA-1101 / DSM 17681 / MLHE-1).